The sequence spans 549 residues: Dihydroxy-acid dehydratase (549 aa).

Aspartate 78 serves as a coordination point for Mg(2+). Cysteine 119 serves as a coordination point for [2Fe-2S] cluster. 2 residues coordinate Mg(2+): aspartate 120 and lysine 121. Lysine 121 bears the N6-carboxylysine mark. Residue cysteine 191 participates in [2Fe-2S] cluster binding. Glutamate 441 contacts Mg(2+). The active-site Proton acceptor is the serine 466.

The protein belongs to the IlvD/Edd family. In terms of assembly, homodimer. [2Fe-2S] cluster serves as cofactor. Requires Mg(2+) as cofactor.

It catalyses the reaction (2R)-2,3-dihydroxy-3-methylbutanoate = 3-methyl-2-oxobutanoate + H2O. It carries out the reaction (2R,3R)-2,3-dihydroxy-3-methylpentanoate = (S)-3-methyl-2-oxopentanoate + H2O. Its pathway is amino-acid biosynthesis; L-isoleucine biosynthesis; L-isoleucine from 2-oxobutanoate: step 3/4. It participates in amino-acid biosynthesis; L-valine biosynthesis; L-valine from pyruvate: step 3/4. Functions in the biosynthesis of branched-chain amino acids. Catalyzes the dehydration of (2R,3R)-2,3-dihydroxy-3-methylpentanoate (2,3-dihydroxy-3-methylvalerate) into 2-oxo-3-methylpentanoate (2-oxo-3-methylvalerate) and of (2R)-2,3-dihydroxy-3-methylbutanoate (2,3-dihydroxyisovalerate) into 2-oxo-3-methylbutanoate (2-oxoisovalerate), the penultimate precursor to L-isoleucine and L-valine, respectively. This chain is Dihydroxy-acid dehydratase, found in Methanobrevibacter smithii (strain ATCC 35061 / DSM 861 / OCM 144 / PS).